A 309-amino-acid polypeptide reads, in one-letter code: Elongation factor Ts (309 aa).

The segment at Thr-82–Val-85 is involved in Mg(2+) ion dislocation from EF-Tu.

This sequence belongs to the EF-Ts family.

It is found in the cytoplasm. Functionally, associates with the EF-Tu.GDP complex and induces the exchange of GDP to GTP. It remains bound to the aminoacyl-tRNA.EF-Tu.GTP complex up to the GTP hydrolysis stage on the ribosome. The polypeptide is Elongation factor Ts (Rickettsia africae (strain ESF-5)).